The primary structure comprises 145 residues: D-aminoacyl-tRNA deacylase (145 aa).

A Gly-cisPro motif, important for rejection of L-amino acids motif is present at residues glycine 137–proline 138.

The protein belongs to the DTD family. Homodimer.

It is found in the cytoplasm. The catalysed reaction is glycyl-tRNA(Ala) + H2O = tRNA(Ala) + glycine + H(+). It catalyses the reaction a D-aminoacyl-tRNA + H2O = a tRNA + a D-alpha-amino acid + H(+). Functionally, an aminoacyl-tRNA editing enzyme that deacylates mischarged D-aminoacyl-tRNAs. Also deacylates mischarged glycyl-tRNA(Ala), protecting cells against glycine mischarging by AlaRS. Acts via tRNA-based rather than protein-based catalysis; rejects L-amino acids rather than detecting D-amino acids in the active site. By recycling D-aminoacyl-tRNA to D-amino acids and free tRNA molecules, this enzyme counteracts the toxicity associated with the formation of D-aminoacyl-tRNA entities in vivo and helps enforce protein L-homochirality. The polypeptide is D-aminoacyl-tRNA deacylase (Aeromonas hydrophila subsp. hydrophila (strain ATCC 7966 / DSM 30187 / BCRC 13018 / CCUG 14551 / JCM 1027 / KCTC 2358 / NCIMB 9240 / NCTC 8049)).